Here is a 245-residue protein sequence, read N- to C-terminus: tRNA1(Val) (adenine(37)-N6)-methyltransferase (245 aa).

The protein belongs to the methyltransferase superfamily. tRNA (adenine-N(6)-)-methyltransferase family.

Its subcellular location is the cytoplasm. The catalysed reaction is adenosine(37) in tRNA1(Val) + S-adenosyl-L-methionine = N(6)-methyladenosine(37) in tRNA1(Val) + S-adenosyl-L-homocysteine + H(+). Functionally, specifically methylates the adenine in position 37 of tRNA(1)(Val) (anticodon cmo5UAC). The protein is tRNA1(Val) (adenine(37)-N6)-methyltransferase (yfiC) of Escherichia coli (strain K12).